The following is a 446-amino-acid chain: ATP-dependent protease ATPase subunit HslU (446 aa).

ATP-binding positions include I18, 60-65 (GVGKTE), D259, E324, and R396.

This sequence belongs to the ClpX chaperone family. HslU subfamily. A double ring-shaped homohexamer of HslV is capped on each side by a ring-shaped HslU homohexamer. The assembly of the HslU/HslV complex is dependent on binding of ATP.

The protein resides in the cytoplasm. Functionally, ATPase subunit of a proteasome-like degradation complex; this subunit has chaperone activity. The binding of ATP and its subsequent hydrolysis by HslU are essential for unfolding of protein substrates subsequently hydrolyzed by HslV. HslU recognizes the N-terminal part of its protein substrates and unfolds these before they are guided to HslV for hydrolysis. In Baumannia cicadellinicola subsp. Homalodisca coagulata, this protein is ATP-dependent protease ATPase subunit HslU.